Consider the following 389-residue polypeptide: Na(+)/H(+) antiporter NhaA (389 aa).

11 helical membrane-spanning segments follow: residues 14–34, 59–79, 95–115, 124–144, 154–174, 177–197, 213–233, 257–277, 292–312, 328–348, and 363–383; these read AGGI…NSPL, LILW…GLEV, SLPT…YLLF, AGWA…MALL, VFLL…IALF, TDLS…LVGL, LILW…GVII, PWST…VYVG, IALG…YIAV, IAPV…IASL, and LGTL…LSKV.

This sequence belongs to the NhaA Na(+)/H(+) (TC 2.A.33) antiporter family.

Its subcellular location is the cell inner membrane. The catalysed reaction is Na(+)(in) + 2 H(+)(out) = Na(+)(out) + 2 H(+)(in). Its function is as follows. Na(+)/H(+) antiporter that extrudes sodium in exchange for external protons. The sequence is that of Na(+)/H(+) antiporter NhaA from Shewanella baltica (strain OS155 / ATCC BAA-1091).